Consider the following 579-residue polypeptide: Proline--tRNA ligase (579 aa).

Belongs to the class-II aminoacyl-tRNA synthetase family. ProS type 1 subfamily. Homodimer.

The protein localises to the cytoplasm. The enzyme catalyses tRNA(Pro) + L-proline + ATP = L-prolyl-tRNA(Pro) + AMP + diphosphate. In terms of biological role, catalyzes the attachment of proline to tRNA(Pro) in a two-step reaction: proline is first activated by ATP to form Pro-AMP and then transferred to the acceptor end of tRNA(Pro). As ProRS can inadvertently accommodate and process non-cognate amino acids such as alanine and cysteine, to avoid such errors it has two additional distinct editing activities against alanine. One activity is designated as 'pretransfer' editing and involves the tRNA(Pro)-independent hydrolysis of activated Ala-AMP. The other activity is designated 'posttransfer' editing and involves deacylation of mischarged Ala-tRNA(Pro). The misacylated Cys-tRNA(Pro) is not edited by ProRS. The sequence is that of Proline--tRNA ligase from Chlamydia muridarum (strain MoPn / Nigg).